Here is a 356-residue protein sequence, read N- to C-terminus: Uroporphyrinogen decarboxylase (356 aa).

Substrate-binding positions include 27-31 (RQAGR), Asp77, Tyr154, Thr209, and His327.

The protein belongs to the uroporphyrinogen decarboxylase family. As to quaternary structure, homodimer.

Its subcellular location is the cytoplasm. It catalyses the reaction uroporphyrinogen III + 4 H(+) = coproporphyrinogen III + 4 CO2. Its pathway is porphyrin-containing compound metabolism; protoporphyrin-IX biosynthesis; coproporphyrinogen-III from 5-aminolevulinate: step 4/4. In terms of biological role, catalyzes the decarboxylation of four acetate groups of uroporphyrinogen-III to yield coproporphyrinogen-III. This Hamiltonella defensa subsp. Acyrthosiphon pisum (strain 5AT) protein is Uroporphyrinogen decarboxylase.